A 122-amino-acid chain; its full sequence is Protein FLORAL ORGAN NUMBER2 (122 aa).

Residues 1–25 (MGRLFLCLVVAWCWVALLLVAPVHG) form the signal peptide. A disordered region spans residues 28-122 (GLPGEFSGDQ…PEHARSTGRP (95 aa)). The span at 54–63 (KQPRGVKGTR) shows a compositional bias: basic residues. The segment covering 64 to 77 (RPSWSSWSSTASRS) has biased composition (low complexity). The segment covering 111 to 122 (RRPEHARSTGRP) has biased composition (basic and acidic residues).

It belongs to the CLV3/ESR signal peptide family.

The protein localises to the secreted. Functionally, probable extracellular signal that regulates meristem maintenance. May function as a putative ligand for a receptor complex including FON1. Regulates the size of the floral meristem and the number of floral organs. The chain is Protein FLORAL ORGAN NUMBER2 (FON2) from Oryza sativa subsp. indica (Rice).